A 141-amino-acid chain; its full sequence is MPGLFAAKKLKSKRQKFKWKDTHYKRRSLRLDVKADPLEGAPQARGIVIEKVGIEAKQPNSAIRKCVRVQLIKNGKQITAFAPGDGAIGFIDEHDEVVVEGIGGPSGRSMGDIPGVRWKVTKVNNVSLQEMVKGKIEKPVR.

The protein belongs to the universal ribosomal protein uS12 family. Part of the 30S ribosomal subunit.

Its function is as follows. With S4 and S5 plays an important role in translational accuracy. Located at the interface of the 30S and 50S subunits. The chain is Small ribosomal subunit protein uS12 from Methanothermobacter thermautotrophicus (strain ATCC 29096 / DSM 1053 / JCM 10044 / NBRC 100330 / Delta H) (Methanobacterium thermoautotrophicum).